A 961-amino-acid chain; its full sequence is E4 ubiquitin-protein ligase UFD2 (961 aa).

Residues 880–954 (DVPDEFLDPL…LCFKKQKKEE (75 aa)) form the U-box domain.

This sequence belongs to the ubiquitin conjugation factor E4 family. In terms of assembly, interacts with CDC48. Interacts with the ubiquitin-like domain of RAD23 and DSK2. Interacts with PEX29.

The protein resides in the cytoplasm. It localises to the nucleus. The enzyme catalyses S-ubiquitinyl-[E2 ubiquitin-conjugating enzyme]-L-cysteine + [acceptor protein]-L-lysine = [E2 ubiquitin-conjugating enzyme]-L-cysteine + N(6)-ubiquitinyl-[acceptor protein]-L-lysine.. It functions in the pathway protein modification; protein ubiquitination. In terms of biological role, E4 ubiquitin chain-elongation enzyme specifically involved in polyubiquitin chain assembly. Binds to CDC48 and elongates mono- and diubiquitinated ERAD substrates presented by the UFD1-NPL4-CDC48/p97 (UNC) AAA ATPase complex to a chain length of 4 to 6 ubiquitin moieties. Delivers these polyubiquitinated substrates to RAD23 and DSK2, which target them to the proteasome. Has E3 ubiquitin-protein ligase activity, accepting ubiquitin from its cognate E2 ubiquitin-conjugating enzyme UBC4. Enhances ubiquitination at 'Lys-48', but not at 'Lys-29' of the Ub moiety. Promotes ubiquitin chain elongation at 'Lys-48' on the DOA10 substrate PEX29. Also involved in the proteolytic processing of the ER-bound transcription factor SPT23. This chain is E4 ubiquitin-protein ligase UFD2 (UFD2), found in Saccharomyces cerevisiae (strain ATCC 204508 / S288c) (Baker's yeast).